The following is a 1197-amino-acid chain: Sensor protein EvgS (1197 aa).

The signal sequence occupies residues 1-21 (MKFLPYIFLLCCGLWSTISFA). The Cytoplasmic portion of the chain corresponds to 22 to 325 (DEDYIEYRGI…SMTDENGSVR (304 aa)). Residues 326-346 (GVMGDILNIITLQTGLNFSPI) form a helical membrane-spanning segment. Residues 347-537 (TVSHNIHAGT…TWDLYSEQFY (191 aa)) are Periplasmic-facing. The helical transmembrane segment at 538-558 (IVTTLSVLLVGSSLLWGFYLL) threads the bilayer. Residues 559-1197 (RSVRRRKVIQ…EIAVFCQQNN (639 aa)) are Cytoplasmic-facing. The Histidine kinase domain maps to 718–938 (TMSHEIRTPI…TFTITIPVEI (221 aa)). H721 carries the post-translational modification Phosphohistidine; by autocatalysis. The region spanning 960–1074 (SILIADDHPT…VLKTHLSQLH (115 aa)) is the Response regulatory domain. 4-aspartylphosphate is present on D1009. Residues 1098–1197 (DLQLMQEILM…EIAVFCQQNN (100 aa)) enclose the HPt domain. H1137 carries the phosphohistidine modification.

Post-translationally, activation requires a sequential transfer of a phosphate group from a His in the primary transmitter domain, to an Asp in the receiver domain and to a His in the secondary transmitter domain.

It localises to the cell inner membrane. The catalysed reaction is ATP + protein L-histidine = ADP + protein N-phospho-L-histidine.. Its function is as follows. Member of the two-component regulatory system EvgS/EvgA. Phosphorylates EvgA via a four-step phosphorelay in response to environmental signals. This is Sensor protein EvgS (evgS) from Escherichia coli O157:H7.